Here is a 200-residue protein sequence, read N- to C-terminus: Recombination protein RecR (200 aa).

The segment at 59–74 adopts a C4-type zinc-finger fold; sequence CDICGNVCESSPCPVC. Residues 82 to 177 form the Toprim domain; it reads SVICVVEEPK…KVTRLASGLP (96 aa).

It belongs to the RecR family.

Its function is as follows. May play a role in DNA repair. It seems to be involved in an RecBC-independent recombinational process of DNA repair. It may act with RecF and RecO. The polypeptide is Recombination protein RecR (Bifidobacterium longum subsp. infantis (strain ATCC 15697 / DSM 20088 / JCM 1222 / NCTC 11817 / S12)).